The primary structure comprises 184 residues: ATP synthase subunit b, chloroplastic (184 aa).

The helical transmembrane segment at 27-49 (LATNLINLSVVLGVLIFFGKGVL) threads the bilayer.

Belongs to the ATPase B chain family. As to quaternary structure, F-type ATPases have 2 components, F(1) - the catalytic core - and F(0) - the membrane proton channel. F(1) has five subunits: alpha(3), beta(3), gamma(1), delta(1), epsilon(1). F(0) has four main subunits: a(1), b(1), b'(1) and c(10-14). The alpha and beta chains form an alternating ring which encloses part of the gamma chain. F(1) is attached to F(0) by a central stalk formed by the gamma and epsilon chains, while a peripheral stalk is formed by the delta, b and b' chains.

It localises to the plastid. The protein localises to the chloroplast thylakoid membrane. Its function is as follows. F(1)F(0) ATP synthase produces ATP from ADP in the presence of a proton or sodium gradient. F-type ATPases consist of two structural domains, F(1) containing the extramembraneous catalytic core and F(0) containing the membrane proton channel, linked together by a central stalk and a peripheral stalk. During catalysis, ATP synthesis in the catalytic domain of F(1) is coupled via a rotary mechanism of the central stalk subunits to proton translocation. Functionally, component of the F(0) channel, it forms part of the peripheral stalk, linking F(1) to F(0). The polypeptide is ATP synthase subunit b, chloroplastic (Manihot esculenta (Cassava)).